The following is a 585-amino-acid chain: DNA mismatch repair protein MutL (585 aa).

The protein belongs to the DNA mismatch repair MutL/HexB family.

Its function is as follows. This protein is involved in the repair of mismatches in DNA. It is required for dam-dependent methyl-directed DNA mismatch repair. May act as a 'molecular matchmaker', a protein that promotes the formation of a stable complex between two or more DNA-binding proteins in an ATP-dependent manner without itself being part of a final effector complex. This is DNA mismatch repair protein MutL from Methanoculleus marisnigri (strain ATCC 35101 / DSM 1498 / JR1).